Consider the following 446-residue polypeptide: Histidine--tRNA ligase (446 aa).

Belongs to the class-II aminoacyl-tRNA synthetase family. Homodimer.

Its subcellular location is the cytoplasm. The enzyme catalyses tRNA(His) + L-histidine + ATP = L-histidyl-tRNA(His) + AMP + diphosphate + H(+). The protein is Histidine--tRNA ligase of Burkholderia pseudomallei (strain 1710b).